Here is a 148-residue protein sequence, read N- to C-terminus: Isotocin-neurophysin IT 2 (148 aa).

Positions Met-1–Ala-20 are cleaved as a signal peptide. A disulfide bridge links Cys-21 with Cys-26. Position 29 is a glycine amide (Gly-29). 7 disulfides stabilise this stretch: Cys-42/Cys-86, Cys-45/Cys-59, Cys-53/Cys-76, Cys-60/Cys-66, Cys-93/Cys-105, Cys-99/Cys-117, and Cys-106/Cys-111.

This sequence belongs to the vasopressin/oxytocin family.

Its function is as follows. Isotocin causes contraction of smooth muscles. This Catostomus commersonii (White sucker) protein is Isotocin-neurophysin IT 2.